The following is a 764-amino-acid chain: Chloride anion exchanger (764 aa).

Residues 1 to 76 lie on the Cytoplasmic side of the membrane; sequence MIEPFGNQYI…YRLKEWLLSD (76 aa). Residues 77–97 form a helical membrane-spanning segment; it reads IVSGISTGIVAVLQGLAFALL. Over 98–99 the chain is Extracellular; that stretch reads VD. Residues 100–120 traverse the membrane as a helical segment; it reads IPPVYGLYASFFPAIIYLFFG. Over 121-124 the chain is Cytoplasmic; it reads TSRH. Residues 125 to 145 traverse the membrane as a helical segment; that stretch reads ISVGPFPILSMMVGLAVSGAV. Over 146–175 the chain is Extracellular; it reads SKAVPDRNATTLGLPNNSNNSSLLDDERVR. Residues N153, N161, and N165 are each glycosylated (N-linked (GlcNAc...) asparagine). The helical transmembrane segment at 176–196 threads the bilayer; the sequence is VAAAASVTVLSGIIQLAFGIL. R197 is a topological domain (cytoplasmic). Residues 198-218 form a helical membrane-spanning segment; it reads IGFVVIYLSESLISGFTTAAA. Residues 219–257 lie on the Extracellular side of the membrane; sequence VHVLVSQLKFIFQLTVPSHTDPVSIFKVLYSVFSQIEKT. Residues 258-278 traverse the membrane as a helical segment; that stretch reads NIADLVTALIVLLVVSIVKEI. Residues 279–342 are Cytoplasmic-facing; it reads NQRFKDKLPV…VETFQNTVGD (64 aa). A helical transmembrane segment spans residues 343-363; the sequence is CFGIAMVAFAVAFSVASVYSL. The Extracellular portion of the chain corresponds to 364-374; that stretch reads KYDYPLDGNQE. The helical transmembrane segment at 375–395 threads the bilayer; that stretch reads LIALGLGNIVCGVFRGFAGST. Residues 396-411 lie on the Cytoplasmic side of the membrane; sequence ALSRSAVQESTGGKTQ. A helical transmembrane segment spans residues 412–432; sequence IAGLIGAIIVLIVVLAIGFLL. Residues 433–469 lie on the Extracellular side of the membrane; that stretch reads APLQKSVLAALALGNLKGMLMQFAEIGRLWRKDKYDC. A helical membrane pass occupies residues 470–490; it reads LIWIMTFIFTIVLGLGLGLAA. At 491–701 the chain is on the cytoplasmic side; the sequence is SVAFQLLTIV…EKLNRYEFFD (211 aa). In terms of domain architecture, STAS spans 525 to 720; it reads DYYDMYEPEG…LTIHDAVLHI (196 aa). The PDZ-binding signature appears at 761–764; that stretch reads ETKF.

Belongs to the SLC26A/SulP transporter (TC 2.A.53) family. Interacts with CFTR, SLC26A6 and NHERF1. Interacts with PDZK1. Interacts (via PDZ-binding motif) with NHERF4 (via the third PDZ domain); interaction leads to decreased expression of SLC26A3 on the cell membrane resulting in its reduced exchanger activity. In terms of processing, N-glycosylation is required for efficient cell surface expression, and protection from proteolytic degradation. In terms of tissue distribution, expressed in the colon. Expression is significantly decreased in adenomas (polyps) and adenocarcinomas of the colon.

The protein resides in the apical cell membrane. It is found in the membrane. Its subcellular location is the cell membrane. It carries out the reaction hydrogencarbonate(in) + 2 chloride(out) = hydrogencarbonate(out) + 2 chloride(in). Its activity is regulated as follows. Inhibited by acidic pH. Mediates chloride-bicarbonate exchange with a chloride bicarbonate stoichiometry of 2:1 in the intestinal epithelia. Plays a role in the chloride and bicarbonate homeostasis during sperm epididymal maturation and capacitation. The polypeptide is Chloride anion exchanger (SLC26A3) (Homo sapiens (Human)).